We begin with the raw amino-acid sequence, 629 residues long: Serine/threonine-protein kinase ICK (629 aa).

The Protein kinase domain maps to 4–284 (YTTIKQLGDG…ASQALRYPYF (281 aa)). Residues 10–18 (LGDGTYGSV) and lysine 33 contribute to the ATP site. Catalysis depends on aspartate 125, which acts as the Proton acceptor. Threonine 157 carries the phosphothreonine modification. Phosphotyrosine is present on tyrosine 159. Position 161 is a phosphoserine (serine 161). Disordered regions lie at residues 292-322 (ISTQ…PAQA), 454-482 (PSEP…QSTA), and 579-629 (GYSS…PSRR). Pro residues predominate over residues 309 to 321 (GPPPYVKPAPPAQ). A compositionally biased stretch (polar residues) spans 460 to 482 (TGTSVSTQASSQRRDTPTLQSTA).

It belongs to the protein kinase superfamily. CMGC Ser/Thr protein kinase family. CDC2/CDKX subfamily. Mg(2+) is required as a cofactor. Post-translationally, autophosphorylated on serine and threonine residues. Phosphorylation at Thr-157 increases kinase activity. As to expression, expressed in embryonic heart from day 11. Highly expressed in the uterus and at lower levels in brain, heart, lung, kidney, skeletal muscle, ovary and liver in adult tissues.

It localises to the cytoplasm. Its subcellular location is the cell projection. It is found in the cilium. The protein localises to the nucleus. The protein resides in the cytoskeleton. It localises to the cilium basal body. It catalyses the reaction L-seryl-[protein] + ATP = O-phospho-L-seryl-[protein] + ADP + H(+). It carries out the reaction L-threonyl-[protein] + ATP = O-phospho-L-threonyl-[protein] + ADP + H(+). In terms of biological role, required for ciliogenesis, particularly in neuronal and retinal progenitor cells. Phosphorylates KIF3A. Involved in the control of ciliary length. Regulates the ciliary localization of SHH pathway components as well as the localization of IFT components at ciliary tips. May play a role in cardiac development. Regulates intraflagellar transport (IFT) speed and negatively regulates cilium length in a cAMP and mTORC1 signaling-dependent manner and this regulation requires its kinase activity. The sequence is that of Serine/threonine-protein kinase ICK (Cilk1) from Rattus norvegicus (Rat).